Reading from the N-terminus, the 667-residue chain is Probable potassium transport system protein Kup (667 aa).

A run of 12 helical transmembrane segments spans residues 16 to 36, 58 to 78, 101 to 121, 146 to 166, 167 to 187, 221 to 241, 253 to 273, 294 to 314, 343 to 363, 373 to 393, 399 to 419, and 431 to 451; these read GFIIALGIVYGDIGTSPLYTM, VSLIIWTLTLITTIKYVLIAL, WLIIPAMLGGATLLSDGALTP, TNVILTTLLILMVLFGLQRFG, TGVIGKLFGPVMLVWFSVLGI, IFILGSIFLATTGAEALYSDL, WPFVKVCIILSYCGQAAWILA, VYLVILATLAAIIASQALISG, LYIPVINWSLFAVTSCTVLYF, YGLAITITMLMTTILLAYYLI, PLLASLLMAFFAFIEFIFFLA, and VVVLALAIVFVMVIWHAGTVI.

The protein belongs to the HAK/KUP transporter (TC 2.A.72) family.

Its subcellular location is the cell membrane. The catalysed reaction is K(+)(in) + H(+)(in) = K(+)(out) + H(+)(out). Functionally, transport of potassium into the cell. Likely operates as a K(+):H(+) symporter. The protein is Probable potassium transport system protein Kup of Streptococcus equi subsp. zooepidemicus (strain MGCS10565).